A 149-amino-acid polypeptide reads, in one-letter code: RALGPLIPSRLFDQFFGEGLLEYDLLPWFSSTISPYYRQSLFRSVLESGISEVRSDREKFTIMLDVKHFSPEDLSVKIIDDFVEIHGKHSERQDDHGYISREFHRRYRLPANVDQAAITCSLSNDGMLTFSGPKVPANMDASHGERPIP.

In terms of domain architecture, sHSP spans 41–149 (LFRSVLESGI…DASHGERPIP (109 aa)). Zn(2+) contacts are provided by H89, E91, H96, and H143.

It belongs to the small heat shock protein (HSP20) family. In terms of assembly, heteropolymer composed of three CRYAA and one CRYAB subunits. Inter-subunit bridging via zinc ions enhances stability, which is crucial as there is no protein turn over in the lens. Can also form homodimers and homotetramers (dimers of dimers) which serve as the building blocks of homooligomers. Within homooligomers, the zinc-binding motif is created from residues of 3 different molecules. His-89 and Glu-91 from one molecule are ligands of the zinc ion, and His-96 and His-143 residues from additional molecules complete the site with tetrahedral coordination geometry. Part of a complex required for lens intermediate filament formation composed of BFSP1, BFSP2 and CRYAA.

It is found in the cytoplasm. The protein resides in the nucleus. Functionally, contributes to the transparency and refractive index of the lens. May act as a chaperone, preventing aggregation of various proteins under a wide range of stress conditions. The polypeptide is Alpha-crystallin A chain (CRYAA) (Columba livia (Rock dove)).